The primary structure comprises 123 residues: uncharacterized protein (123 aa).

Residues 1-21 (MHIIAKSILLMAVSFLVIIFT) traverse the membrane as a helical segment.

Its subcellular location is the membrane. This is an uncharacterized protein from Methanocaldococcus jannaschii (strain ATCC 43067 / DSM 2661 / JAL-1 / JCM 10045 / NBRC 100440) (Methanococcus jannaschii).